The sequence spans 355 residues: F-box only protein 32 (355 aa).

A Nuclear localization signal motif is present at residues 62 to 67 (KKRKKD). Residues 169 to 173 (LLQTL) carry the Nuclear export signal motif. One can recognise an F-box domain in the interval 223-271 (LTFTDLPLCLQLNIMQRLSDGRDLVSLGQAAPDLHVLSEDRLLWKKLCQ). The Bipartite nuclear localization signal signature appears at 280–295 (RKRLILSDKGQLDWKK).

In terms of assembly, part of the SCF (SKP1-CUL1-F-box) E3 ubiquitin-protein ligase complex SCF(FBXO32) formed of CUL1, SKP1, RBX1 and FBXO32. Specifically expressed in cardiac and skeletal muscle.

Its subcellular location is the cytoplasm. The protein localises to the nucleus. It functions in the pathway protein modification; protein ubiquitination. In terms of biological role, substrate recognition component of a SCF (SKP1-CUL1-F-box protein) E3 ubiquitin-protein ligase complex which mediates the ubiquitination and subsequent proteasomal degradation of target proteins. Probably recognizes and binds to phosphorylated target proteins during skeletal muscle atrophy. Recognizes TERF1. In Homo sapiens (Human), this protein is F-box only protein 32 (FBXO32).